The following is a 298-amino-acid chain: Syntaxin-125 (298 aa).

An N-acetylmethionine modification is found at Met1. The Cytoplasmic portion of the chain corresponds to Met1 to Ala274. A coiled-coil region spans residues Thr25–Arg155. The region spanning Ile198–Ala260 is the t-SNARE coiled-coil homology domain. Residues Ile275–Leu295 traverse the membrane as a helical; Anchor for type IV membrane protein segment. Residues Met296–Lys298 are Vesicular-facing.

Belongs to the syntaxin family. In terms of assembly, part of the t-SNARE complex.

The protein localises to the membrane. Functionally, vesicle trafficking protein that functions in the secretory pathway. The chain is Syntaxin-125 (SYP125) from Arabidopsis thaliana (Mouse-ear cress).